The primary structure comprises 430 residues: UDP-N-acetylglucosamine 1-carboxyvinyltransferase 1 (430 aa).

Residue 22 to 23 (KN) coordinates phosphoenolpyruvate. R102 is a binding site for UDP-N-acetyl-alpha-D-glucosamine. The active-site Proton donor is C126. A 2-(S-cysteinyl)pyruvic acid O-phosphothioketal modification is found at C126. Residues 131–135 (RPVDL), 172–175 (KVSV), D317, and I339 each bind UDP-N-acetyl-alpha-D-glucosamine.

It belongs to the EPSP synthase family. MurA subfamily.

It localises to the cytoplasm. It carries out the reaction phosphoenolpyruvate + UDP-N-acetyl-alpha-D-glucosamine = UDP-N-acetyl-3-O-(1-carboxyvinyl)-alpha-D-glucosamine + phosphate. Its pathway is cell wall biogenesis; peptidoglycan biosynthesis. Functionally, cell wall formation. Adds enolpyruvyl to UDP-N-acetylglucosamine. The sequence is that of UDP-N-acetylglucosamine 1-carboxyvinyltransferase 1 from Mesorhizobium japonicum (strain LMG 29417 / CECT 9101 / MAFF 303099) (Mesorhizobium loti (strain MAFF 303099)).